Consider the following 142-residue polypeptide: Small ribosomal subunit protein uS9 (142 aa).

The tract at residues 117 to 142 (KGDPRRTEHKKPGIKHARSKRQKAYR) is disordered. A compositionally biased stretch (basic residues) spans 123-142 (TEHKKPGIKHARSKRQKAYR).

This sequence belongs to the universal ribosomal protein uS9 family.

The protein is Small ribosomal subunit protein uS9 of Pyrobaculum aerophilum (strain ATCC 51768 / DSM 7523 / JCM 9630 / CIP 104966 / NBRC 100827 / IM2).